A 590-amino-acid chain; its full sequence is Aspartate--tRNA(Asp/Asn) ligase (590 aa).

Glu170 provides a ligand contact to L-aspartate. The segment at 194 to 197 is aspartate; sequence QLFK. Arg216 provides a ligand contact to L-aspartate. Residues 216–218 and Gln225 contribute to the ATP site; that span reads RDE. Residue His448 participates in L-aspartate binding. Glu482 lines the ATP pocket. Residue Arg489 participates in L-aspartate binding. 534-537 contributes to the ATP binding site; that stretch reads GWDR. The disordered stretch occupies residues 557–590; that stretch reads SGGGADPLTGAPAPITPQQRRESGIDAKPKKDGE. Residues 575-590 are compositionally biased toward basic and acidic residues; that stretch reads QRRESGIDAKPKKDGE.

It belongs to the class-II aminoacyl-tRNA synthetase family. Type 1 subfamily. As to quaternary structure, homodimer.

Its subcellular location is the cytoplasm. It catalyses the reaction tRNA(Asx) + L-aspartate + ATP = L-aspartyl-tRNA(Asx) + AMP + diphosphate. Functionally, aspartyl-tRNA synthetase with relaxed tRNA specificity since it is able to aspartylate not only its cognate tRNA(Asp) but also tRNA(Asn). Reaction proceeds in two steps: L-aspartate is first activated by ATP to form Asp-AMP and then transferred to the acceptor end of tRNA(Asp/Asn). The protein is Aspartate--tRNA(Asp/Asn) ligase of Mycobacterium sp. (strain KMS).